Here is a 179-residue protein sequence, read N- to C-terminus: DELTA-miturgitoxin-Cp2a (179 aa).

The first 20 residues, 1–20 (MKFSLFFGVLFLAILHSCLS), serve as a signal peptide directing secretion. Residues 21 to 47 (ESEKDLTDEDHFRSSDSFLSEIQEESR) constitute a propeptide that is removed on maturation. The Processing quadruplet motif motif lies at 44–47 (EESR). Disulfide bonds link Cys-51–Cys-66, Cys-58–Cys-75, Cys-65–Cys-88, Cys-77–Cys-86, Cys-115–Cys-130, Cys-122–Cys-139, Cys-129–Cys-158, and Cys-141–Cys-156. Val-178 is subject to Valine amide.

This sequence belongs to the spider toxin CSTX family. Double-CSTX subfamily. Cleavage of the propeptide depends on the processing quadruplet motif (XXXR, with at least one of X being E). Expressed by the venom gland.

It is found in the secreted. Functionally, spider venom toxin that exhibits cytolytic activity by forming an alpha-helix across the membrane. Lethal to insect larvae. This Cheiracanthium punctorium (Yellow sac spider) protein is DELTA-miturgitoxin-Cp2a.